We begin with the raw amino-acid sequence, 210 residues long: Putative 3-methyladenine DNA glycosylase (210 aa).

It belongs to the DNA glycosylase MPG family.

The sequence is that of Putative 3-methyladenine DNA glycosylase from Lactobacillus acidophilus (strain ATCC 700396 / NCK56 / N2 / NCFM).